A 113-amino-acid polypeptide reads, in one-letter code: T cell receptor alpha variable 5 (113 aa).

The first 22 residues, 1–22 (MKTFAGFSFLFLWLQLDCMSRG), serve as a signal peptide directing secretion. The 91-residue stretch at 23-113 (EDVEQSLFLS…DSAIYFCAES (91 aa)) folds into the Ig-like domain. Asparagine 42 carries an N-linked (GlcNAc...) asparagine glycan. Residues cysteine 43 and cysteine 110 are joined by a disulfide bond.

In terms of assembly, alpha-beta TR is a heterodimer composed of an alpha and beta chain; disulfide-linked. The alpha-beta TR is associated with the transmembrane signaling CD3 coreceptor proteins to form the TR-CD3 (TcR or TCR). The assembly of alpha-beta TR heterodimers with CD3 occurs in the endoplasmic reticulum where a single alpha-beta TR heterodimer associates with one CD3D-CD3E heterodimer, one CD3G-CD3E heterodimer and one CD247 homodimer forming a stable octameric structure. CD3D-CD3E and CD3G-CD3E heterodimers preferentially associate with TR alpha and TR beta chains, respectively. The association of the CD247 homodimer is the last step of TcR assembly in the endoplasmic reticulum and is required for transport to the cell surface.

It localises to the cell membrane. Its function is as follows. V region of the variable domain of T cell receptor (TR) alpha chain that participates in the antigen recognition. Alpha-beta T cell receptors are antigen specific receptors which are essential to the immune response and are present on the cell surface of T lymphocytes. Recognize peptide-major histocompatibility (MH) (pMH) complexes that are displayed by antigen presenting cells (APC), a prerequisite for efficient T cell adaptive immunity against pathogens. Binding of alpha-beta TR to pMH complex initiates TR-CD3 clustering on the cell surface and intracellular activation of LCK that phosphorylates the ITAM motifs of CD3G, CD3D, CD3E and CD247 enabling the recruitment of ZAP70. In turn ZAP70 phosphorylates LAT, which recruits numerous signaling molecules to form the LAT signalosome. The LAT signalosome propagates signal branching to three major signaling pathways, the calcium, the mitogen-activated protein kinase (MAPK) kinase and the nuclear factor NF-kappa-B (NF-kB) pathways, leading to the mobilization of transcription factors that are critical for gene expression and essential for T cell growth and differentiation. The T cell repertoire is generated in the thymus, by V-(D)-J rearrangement. This repertoire is then shaped by intrathymic selection events to generate a peripheral T cell pool of self-MH restricted, non-autoaggressive T cells. Post-thymic interaction of alpha-beta TR with the pMH complexes shapes TR structural and functional avidity. The protein is T cell receptor alpha variable 5 of Homo sapiens (Human).